A 267-amino-acid polypeptide reads, in one-letter code: Malonyl-[acyl-carrier protein] O-methyltransferase (267 aa).

It belongs to the methyltransferase superfamily.

It carries out the reaction malonyl-[ACP] + S-adenosyl-L-methionine = malonyl-[ACP] methyl ester + S-adenosyl-L-homocysteine. It functions in the pathway cofactor biosynthesis; biotin biosynthesis. Its function is as follows. Converts the free carboxyl group of a malonyl-thioester to its methyl ester by transfer of a methyl group from S-adenosyl-L-methionine (SAM). It allows to synthesize pimeloyl-ACP via the fatty acid synthetic pathway. In Geobacter sulfurreducens (strain ATCC 51573 / DSM 12127 / PCA), this protein is Malonyl-[acyl-carrier protein] O-methyltransferase.